We begin with the raw amino-acid sequence, 561 residues long: Arginine--tRNA ligase (561 aa).

The 'HIGH' region signature appears at 129–139 (ANPTGPLHVGH).

Belongs to the class-I aminoacyl-tRNA synthetase family. In terms of assembly, monomer.

The protein resides in the cytoplasm. It catalyses the reaction tRNA(Arg) + L-arginine + ATP = L-arginyl-tRNA(Arg) + AMP + diphosphate. The chain is Arginine--tRNA ligase from Bordetella bronchiseptica (strain ATCC BAA-588 / NCTC 13252 / RB50) (Alcaligenes bronchisepticus).